Here is a 423-residue protein sequence, read N- to C-terminus: 5-hydroxytryptamine receptor 1A (423 aa).

The Extracellular portion of the chain corresponds to 1-38 (MEGLSPRQGNNTTSSEGPFGTLGNATGISDVTFSYQVI). N10, N11, and N24 each carry an N-linked (GlcNAc...) asparagine glycan. A helical membrane pass occupies residues 39–59 (TSLLLGTLIFCAVLGNACVVA). The Cytoplasmic segment spans residues 60–73 (AIALERSLQNVANY). A helical transmembrane segment spans residues 74–98 (LIGSLAVTDLMVSVLVLPMAALYQV). Residues 99–107 (LNKWTLGQV) are Extracellular-facing. The helical transmembrane segment at 108–132 (TCDLFIALDVLCCTSSILHLCAIAL) threads the bilayer. C109 and C187 are disulfide-bonded. The serotonin site is built by D116 and C120. A DRY motif; important for ligand-induced conformation changes motif is present at residues 133–135 (DRY). At 133 to 152 (DRYWAITDPIDYVNKRTPRR) the chain is on the cytoplasmic side. A helical transmembrane segment spans residues 153–174 (AAALISLTWLIGFLISIPPMLG). Topologically, residues 175 to 193 (WRTPEDRSDPDACTISKDH) are extracellular. Residues 194–216 (GYTIYSTFGAFYIPLLLMLVLYG) traverse the membrane as a helical segment. The Cytoplasmic portion of the chain corresponds to 217 to 346 (RIFRAARFRI…LARERKTVKT (130 aa)). The tract at residues 235 to 277 (RKGADARSGVSPAPQPRKSVNGEPGGREWRQGPGSQAGGPLCT) is disordered. Residues K345, T346, and G352 each contribute to the 1D-myo-inositol 4-phosphate site. A helical transmembrane segment spans residues 347-370 (LGIIMGTFILCWLPFFIVALVLPF). At 371–378 (CESSCHMP) the chain is on the extracellular side. A helical transmembrane segment spans residues 379–403 (TLLGAIINWLGYSNSLLNPVIYAYF). An NPxxY motif; important for ligand-induced conformation changes and signaling motif is present at residues 396–400 (NPVIY). Positions 403, 404, and 405 each coordinate 1D-myo-inositol 4-phosphate. The Cytoplasmic segment spans residues 404-423 (NKDFQNAFKKIVRCKFCRRR).

The protein belongs to the G-protein coupled receptor 1 family. 5-hydroxytryptamine receptor subfamily. HTR1A sub-subfamily. As to quaternary structure, heterodimer; heterodimerizes with GPER1. Interacts with YIF1B. Interacts with GPR39 and GALR1.

The protein localises to the cell membrane. Its subcellular location is the cell projection. It localises to the dendrite. With respect to regulation, G-protein coupled receptor activity is regulated by lipids: phosphatidylinositol 4-phosphate increases HTR1A-mediated activity. G-protein coupled receptor for 5-hydroxytryptamine (serotonin). Also functions as a receptor for various drugs and psychoactive substances. Ligand binding causes a conformation change that triggers signaling via guanine nucleotide-binding proteins (G proteins) and modulates the activity of downstream effectors, such as adenylate cyclase. HTR1A is coupled to G(i)/G(o) G alpha proteins and mediates inhibitory neurotransmission: signaling inhibits adenylate cyclase activity and activates a phosphatidylinositol-calcium second messenger system that regulates the release of Ca(2+) ions from intracellular stores. Beta-arrestin family members regulate signaling by mediating both receptor desensitization and resensitization processes. The sequence is that of 5-hydroxytryptamine receptor 1A (HTR1A) from Canis lupus familiaris (Dog).